The sequence spans 89 residues: Cell division protein ZapA (89 aa).

This sequence belongs to the ZapA family. Type 2 subfamily. Homodimer. Interacts with FtsZ.

The protein resides in the cytoplasm. Its function is as follows. Activator of cell division through the inhibition of FtsZ GTPase activity, therefore promoting FtsZ assembly into bundles of protofilaments necessary for the formation of the division Z ring. It is recruited early at mid-cell but it is not essential for cell division. The sequence is that of Cell division protein ZapA from Bacillus mycoides (strain KBAB4) (Bacillus weihenstephanensis).